A 287-amino-acid chain; its full sequence is Diaminopimelate epimerase (287 aa).

Residues Asn13, Gln46, and Asn66 each coordinate substrate. The active-site Proton donor is Cys75. Substrate is bound by residues 76–77, Asn166, Asn199, and 217–218; these read GN and ER. Cys226 acts as the Proton acceptor in catalysis. Substrate is bound at residue 227 to 228; the sequence is GT.

Belongs to the diaminopimelate epimerase family. Homodimer.

The protein localises to the cytoplasm. The enzyme catalyses (2S,6S)-2,6-diaminopimelate = meso-2,6-diaminopimelate. It functions in the pathway amino-acid biosynthesis; L-lysine biosynthesis via DAP pathway; DL-2,6-diaminopimelate from LL-2,6-diaminopimelate: step 1/1. In terms of biological role, catalyzes the stereoinversion of LL-2,6-diaminopimelate (L,L-DAP) to meso-diaminopimelate (meso-DAP), a precursor of L-lysine and an essential component of the bacterial peptidoglycan. In Paraburkholderia xenovorans (strain LB400), this protein is Diaminopimelate epimerase.